We begin with the raw amino-acid sequence, 373 residues long: tRNA-specific 2-thiouridylase MnmA (373 aa).

ATP contacts are provided by residues 12 to 19 (GMSGGVDS) and Met38. The interval 98–100 (NPD) is interaction with target base in tRNA. The Nucleophile role is filled by Cys103. Cys103 and Cys200 are oxidised to a cystine. Residue Gly127 participates in ATP binding. The segment at 150–152 (KDQ) is interaction with tRNA. The Cysteine persulfide intermediate role is filled by Cys200. Residues 312–313 (RY) are interaction with tRNA.

This sequence belongs to the MnmA/TRMU family.

Its subcellular location is the cytoplasm. The enzyme catalyses S-sulfanyl-L-cysteinyl-[protein] + uridine(34) in tRNA + AH2 + ATP = 2-thiouridine(34) in tRNA + L-cysteinyl-[protein] + A + AMP + diphosphate + H(+). Functionally, catalyzes the 2-thiolation of uridine at the wobble position (U34) of tRNA, leading to the formation of s(2)U34. The polypeptide is tRNA-specific 2-thiouridylase MnmA (Streptococcus pyogenes serotype M1).